We begin with the raw amino-acid sequence, 313 residues long: Putative S-adenosyl-L-methionine-dependent methyltransferase MAV_4573 (313 aa).

S-adenosyl-L-methionine is bound by residues aspartate 129 and 158–159; that span reads DL.

Belongs to the UPF0677 family.

Functionally, exhibits S-adenosyl-L-methionine-dependent methyltransferase activity. This is Putative S-adenosyl-L-methionine-dependent methyltransferase MAV_4573 from Mycobacterium avium (strain 104).